The primary structure comprises 183 residues: Proton-transporting V-type ATPase complex assembly regulator TMEM9 (183 aa).

Residues M1–A20 form the signal peptide. 3 N-linked (GlcNAc...) asparagine glycosylation sites follow: N21, N38, and N47. The Extracellular segment spans residues N21 to K89. The chain crosses the membrane as a helical span at residues V90–M110. Over L111–S183 the chain is Cytoplasmic. Phosphoserine is present on S144.

The protein belongs to the TMEM9 family. Interacts with the v-ATPase accessory protein ATP6AP2 and with the v-ATPase complex subunit ATP6V0D1; these interactions lead to the assembly of the v-ATPase complex. Post-translationally, N-glycosylated. As to expression, expressed in heart, lung, kidney, liver and intestines. Enriched in the hepatocytes around the central vein.

It is found in the lysosome membrane. The protein localises to the late endosome membrane. Its subcellular location is the endosome. The protein resides in the multivesicular body membrane. In terms of biological role, transmembrane protein that binds to and facilitates the assembly of lysosomal proton-transporting V-type ATPase (v-ATPase), resulting in enhanced lysosomal acidification and trafficking. By bringing the v-ATPase accessory protein ATP6AP2 and the v-ATPase subunit ATP6V0D1 together, allows v-ATPase complex formation and activation. TMEM9-controlled vesicular acidification induces hyperactivation of Wnt/beta-catenin signaling, involved in development, tissue homeostasis and tissue regeneration, through lysosomal degradation of adenomatous polyposis coli/APC. In the liver, involved in hepatic regeneration. This is Proton-transporting V-type ATPase complex assembly regulator TMEM9 from Mus musculus (Mouse).